The primary structure comprises 173 residues: uncharacterized protein (173 aa).

Residues 4–173 (VKIVQVSEKD…TDFLLKKALV (170 aa)) form the N-acetyltransferase domain. Acetyl-CoA-binding positions include 97–99 (IYL), 106–110 (RGLGK), and 136–138 (NEN).

This is an uncharacterized protein from Lactobacillus delbrueckii subsp. lactis.